We begin with the raw amino-acid sequence, 259 residues long: Undecaprenyl-diphosphatase 4 (259 aa).

8 helical membrane-spanning segments follow: residues 1–21, 39–59, 71–91, 99–119, 133–153, 173–193, 208–228, and 239–259; these read MNWL…FLPI, AGLF…FIYY, FSKL…IGLL, ISKT…FLYM, ITYK…FPAI, AAYF…ILQF, SLIV…SWMI, and FAYY…THVF.

This sequence belongs to the UppP family.

Its subcellular location is the cell membrane. The catalysed reaction is di-trans,octa-cis-undecaprenyl diphosphate + H2O = di-trans,octa-cis-undecaprenyl phosphate + phosphate + H(+). Its function is as follows. Catalyzes the dephosphorylation of undecaprenyl diphosphate (UPP). Confers resistance to bacitracin. This chain is Undecaprenyl-diphosphatase 4, found in Bacillus thuringiensis (strain Al Hakam).